The following is a 255-amino-acid chain: Sporulation-specific N-acetylmuramoyl-L-alanine amidase (255 aa).

One can recognise a MurNAc-LAA domain in the interval 4-172 (IFIDPGHGGS…LARGHANGLE (169 aa)). Residues His-10, Glu-24, and His-79 each coordinate Zn(2+). Glu-141 is a catalytic residue. In terms of domain architecture, SPOR spans 180 to 254 (TSSSGLYKVQ…AGFDAIVILE (75 aa)). 2 consecutive repeat copies span residues 184 to 219 (GLYK…LLKD) and 220 to 255 (GLYK…ILES). The interval 184–255 (GLYKVQIGAF…GFDAIVILES (72 aa)) is 2 X 35 AA approximate tandem repeats.

It belongs to the N-acetylmuramoyl-L-alanine amidase 3 family. Requires Zn(2+) as cofactor.

The protein localises to the secreted. Its subcellular location is the cell wall. The catalysed reaction is Hydrolyzes the link between N-acetylmuramoyl residues and L-amino acid residues in certain cell-wall glycopeptides.. With respect to regulation, inhibited by EDTA. In terms of biological role, autolysins are involved in some important biological processes such as cell separation, cell-wall turnover, competence for genetic transformation, formation of the flagella - in particular of its basal body - and sporulation. CwlC is able to hydrolyze type A cell walls such as B.subtilis. Its main function is to lyze the mother cell wall peptidoglycan, playing a role during sporulation. The protein is Sporulation-specific N-acetylmuramoyl-L-alanine amidase (cwlC) of Bacillus subtilis (strain 168).